A 261-amino-acid polypeptide reads, in one-letter code: Small ribosomal subunit protein eS4 (261 aa).

The region spanning 42–100 (LPLILILRNRLKYALTYREVVSILMQRHILVDGKIHFCIRLSDVVSIPKTNENFRLLYD) is the S4 RNA-binding domain.

This sequence belongs to the eukaryotic ribosomal protein eS4 family.

It localises to the cytoplasm. This is Small ribosomal subunit protein eS4 (RPS4) from Prunus armeniaca (Apricot).